A 196-amino-acid polypeptide reads, in one-letter code: dTDP-4-dehydro-6-deoxyglucose 3-epimerase (196 aa).

Substrate is bound by residues R21, E26, 45–47 (QVN), and R57. H60 acts as the Proton acceptor in catalysis. Residues K70 and R117 each coordinate substrate. The active-site Proton donor is the Y130. Positions 141 and 166 each coordinate substrate.

It belongs to the dTDP-4-dehydrorhamnose 3,5-epimerase family. As to quaternary structure, homodimer.

The enzyme catalyses dTDP-4-dehydro-6-deoxy-alpha-D-glucose = dTDP-4-dehydro-6-deoxy-alpha-D-allose. The protein operates within antibiotic biosynthesis. Functionally, involved in the biosynthesis of dTDP-6-deoxy-D-allose, an intermediate in the biosynthesis of mycinose, which is one of the two unusual sugars attached to the 16-membered macrolactone ring of the aglycone antibiotic chalcomycin. Catalyzes the conversion of dTDP-4-oxo-6-deoxyglucose to dTDP-4-oxo-6-deoxyallose, via a C-3 epimerization. The chain is dTDP-4-dehydro-6-deoxyglucose 3-epimerase from Streptomyces bikiniensis.